The primary structure comprises 244 residues: Kallikrein-6 (244 aa).

An N-terminal signal peptide occupies residues 1–16; it reads MKKLMVVLSLIAAAWA. Residues 17-21 constitute a propeptide, activation peptide; it reads EEQNK. Positions 22 to 242 constitute a Peptidase S1 domain; that stretch reads LVHGGPCDKT…YTNWIQKTIQ (221 aa). 6 disulfide bridges follow: C28–C157, C47–C63, C131–C231, C138–C203, C168–C182, and C193–C218. Residues H62 and D106 each act as charge relay system in the active site. N134 carries an N-linked (GlcNAc...) asparagine glycan. Catalysis depends on S197, which acts as the Charge relay system.

In terms of processing, inactivated by autolytic cleavage after Arg-80. As to expression, in fluids, highest levels found in milk of lactating women followed by cerebrospinal fluid, nipple aspirate fluid and breast cyst fluid. Also found in serum, seminal plasma and some amniotic fluids and breast tumor cytosolic extracts. Not detected in urine. At the tissue level, highest concentrations found in glandular tissues such as salivary glands followed by lung, colon, fallopian tube, placenta, breast, pituitary and kidney. Not detected in skin, spleen, bone, thyroid, heart, ureter, liver, muscle, endometrium, testis, pancreas, seminal vesicle, ovary, adrenals and prostate. In brain, detected in gray matter neurons (at protein level). Colocalizes with pathological inclusions such as Lewy bodies and glial cytoplasmic inclusions. Overexpressed in primary breast tumors but not expressed in metastatic tumors.

It is found in the secreted. The protein resides in the nucleus. It localises to the nucleolus. Its subcellular location is the cytoplasm. The protein localises to the mitochondrion. It is found in the microsome. Its activity is regulated as follows. Inhibited by a range of serine protease inhibitors including soybean trypsin inhibitor, benzamidine and serpins. Activated by a range of glycosaminoglycans including chondroitin sulfate, dermatan sulfate, heparan sulfate and heparin. In terms of biological role, serine protease which exhibits a preference for Arg over Lys in the substrate P1 position and for Ser or Pro in the P2 position. Shows activity against amyloid precursor protein, myelin basic protein, gelatin, casein and extracellular matrix proteins such as fibronectin, laminin, vitronectin and collagen. Degrades alpha-synuclein and prevents its polymerization, indicating that it may be involved in the pathogenesis of Parkinson disease and other synucleinopathies. May be involved in regulation of axon outgrowth following spinal cord injury. Tumor cells treated with a neutralizing KLK6 antibody migrate less than control cells, suggesting a role in invasion and metastasis. The protein is Kallikrein-6 (KLK6) of Homo sapiens (Human).